We begin with the raw amino-acid sequence, 185 residues long: Ribosome-recycling factor (185 aa).

It belongs to the RRF family.

The protein resides in the cytoplasm. Its function is as follows. Responsible for the release of ribosomes from messenger RNA at the termination of protein biosynthesis. May increase the efficiency of translation by recycling ribosomes from one round of translation to another. The sequence is that of Ribosome-recycling factor from Campylobacter hominis (strain ATCC BAA-381 / DSM 21671 / CCUG 45161 / LMG 19568 / NCTC 13146 / CH001A).